The primary structure comprises 321 residues: Acetyl-coenzyme A carboxylase carboxyl transferase subunit alpha (321 aa).

The region spanning 37–298 (DLDDEIKRLQ…KQRILSDLED (262 aa)) is the CoA carboxyltransferase C-terminal domain.

This sequence belongs to the AccA family. As to quaternary structure, acetyl-CoA carboxylase is a heterohexamer composed of biotin carboxyl carrier protein (AccB), biotin carboxylase (AccC) and two subunits each of ACCase subunit alpha (AccA) and ACCase subunit beta (AccD).

It localises to the cytoplasm. It carries out the reaction N(6)-carboxybiotinyl-L-lysyl-[protein] + acetyl-CoA = N(6)-biotinyl-L-lysyl-[protein] + malonyl-CoA. The protein operates within lipid metabolism; malonyl-CoA biosynthesis; malonyl-CoA from acetyl-CoA: step 1/1. Its function is as follows. Component of the acetyl coenzyme A carboxylase (ACC) complex. First, biotin carboxylase catalyzes the carboxylation of biotin on its carrier protein (BCCP) and then the CO(2) group is transferred by the carboxyltransferase to acetyl-CoA to form malonyl-CoA. The chain is Acetyl-coenzyme A carboxylase carboxyl transferase subunit alpha from Mannheimia succiniciproducens (strain KCTC 0769BP / MBEL55E).